Here is a 297-residue protein sequence, read N- to C-terminus: Nitrogenase iron protein 2 (297 aa).

Gly-14–Ser-21 serves as a coordination point for ATP. Cys-102 contacts [4Fe-4S] cluster. The residue at position 105 (Arg-105) is an ADP-ribosylarginine; by dinitrogenase reductase ADP-ribosyltransferase. Cys-136 lines the [4Fe-4S] cluster pocket.

This sequence belongs to the NifH/BchL/ChlL family. As to quaternary structure, homodimer. [4Fe-4S] cluster is required as a cofactor. The reversible ADP-ribosylation of Arg-105 inactivates the nitrogenase reductase and regulates nitrogenase activity.

It carries out the reaction N2 + 8 reduced [2Fe-2S]-[ferredoxin] + 16 ATP + 16 H2O = H2 + 8 oxidized [2Fe-2S]-[ferredoxin] + 2 NH4(+) + 16 ADP + 16 phosphate + 6 H(+). The key enzymatic reactions in nitrogen fixation are catalyzed by the nitrogenase complex, which has 2 components: the iron protein and the molybdenum-iron protein. This Nostoc sp. (strain PCC 7120 / SAG 25.82 / UTEX 2576) protein is Nitrogenase iron protein 2 (nifH2).